A 498-amino-acid chain; its full sequence is Lysine--tRNA ligase (498 aa).

Positions 407 and 414 each coordinate Mg(2+).

This sequence belongs to the class-II aminoacyl-tRNA synthetase family. In terms of assembly, homodimer. It depends on Mg(2+) as a cofactor.

It localises to the cytoplasm. It catalyses the reaction tRNA(Lys) + L-lysine + ATP = L-lysyl-tRNA(Lys) + AMP + diphosphate. The chain is Lysine--tRNA ligase from Rhizobium johnstonii (strain DSM 114642 / LMG 32736 / 3841) (Rhizobium leguminosarum bv. viciae).